The sequence spans 443 residues: Dihydroorotase (443 aa).

The Zn(2+) site is built by His-80 and His-82. Substrate is bound by residues 82–84 (HFR) and Asn-114. Residues Asp-170, His-197, and His-251 each coordinate Zn(2+). Asn-297 is a substrate binding site. Asp-324 is a Zn(2+) binding site. Asp-324 is a catalytic residue. Residues His-328 and 342-343 (FG) each bind substrate.

This sequence belongs to the metallo-dependent hydrolases superfamily. DHOase family. Class I DHOase subfamily. The cofactor is Zn(2+).

It catalyses the reaction (S)-dihydroorotate + H2O = N-carbamoyl-L-aspartate + H(+). Its pathway is pyrimidine metabolism; UMP biosynthesis via de novo pathway; (S)-dihydroorotate from bicarbonate: step 3/3. In terms of biological role, catalyzes the reversible cyclization of carbamoyl aspartate to dihydroorotate. The polypeptide is Dihydroorotase (Wolbachia sp. subsp. Brugia malayi (strain TRS)).